The sequence spans 423 residues: Serine--tRNA ligase (423 aa).

229–231 serves as a coordination point for L-serine; sequence TAE. 260–262 provides a ligand contact to ATP; that stretch reads RRE. Position 283 (Glu-283) interacts with L-serine. 347–350 is an ATP binding site; that stretch reads EISS. Position 383 (Ser-383) interacts with L-serine.

The protein belongs to the class-II aminoacyl-tRNA synthetase family. Type-1 seryl-tRNA synthetase subfamily. Homodimer. The tRNA molecule binds across the dimer.

The protein localises to the cytoplasm. The catalysed reaction is tRNA(Ser) + L-serine + ATP = L-seryl-tRNA(Ser) + AMP + diphosphate + H(+). It carries out the reaction tRNA(Sec) + L-serine + ATP = L-seryl-tRNA(Sec) + AMP + diphosphate + H(+). The protein operates within aminoacyl-tRNA biosynthesis; selenocysteinyl-tRNA(Sec) biosynthesis; L-seryl-tRNA(Sec) from L-serine and tRNA(Sec): step 1/1. In terms of biological role, catalyzes the attachment of serine to tRNA(Ser). Is also able to aminoacylate tRNA(Sec) with serine, to form the misacylated tRNA L-seryl-tRNA(Sec), which will be further converted into selenocysteinyl-tRNA(Sec). The sequence is that of Serine--tRNA ligase from Trichlorobacter lovleyi (strain ATCC BAA-1151 / DSM 17278 / SZ) (Geobacter lovleyi).